A 314-amino-acid polypeptide reads, in one-letter code: tRNA-cytidine(32) 2-sulfurtransferase (314 aa).

A PP-loop motif motif is present at residues 57-62 (SGGKDS). [4Fe-4S] cluster-binding residues include cysteine 132, cysteine 135, and cysteine 223.

The protein belongs to the TtcA family. In terms of assembly, homodimer. Mg(2+) is required as a cofactor. [4Fe-4S] cluster serves as cofactor.

It is found in the cytoplasm. The catalysed reaction is cytidine(32) in tRNA + S-sulfanyl-L-cysteinyl-[cysteine desulfurase] + AH2 + ATP = 2-thiocytidine(32) in tRNA + L-cysteinyl-[cysteine desulfurase] + A + AMP + diphosphate + H(+). The protein operates within tRNA modification. Catalyzes the ATP-dependent 2-thiolation of cytidine in position 32 of tRNA, to form 2-thiocytidine (s(2)C32). The sulfur atoms are provided by the cysteine/cysteine desulfurase (IscS) system. The protein is tRNA-cytidine(32) 2-sulfurtransferase of Alkalilimnicola ehrlichii (strain ATCC BAA-1101 / DSM 17681 / MLHE-1).